Reading from the N-terminus, the 571-residue chain is Chitin-inducible gibberellin-responsive protein 1 (571 aa).

The span at 61–77 shows a compositional bias: polar residues; the sequence is TNTPDNQSSTETISAQP. Disordered stretches follow at residues 61-80 and 151-180; these read TNTP…PISP and QRSR…YPTA. The GRAS domain occupies 192-571; the sequence is ELREDPQIIV…RKLISASAWH (380 aa). Residues 199-259 form a leucine repeat I (LRI) region; it reads IIVKQLLTRC…VARHGNSGTN (61 aa). Positions 278 to 343 are VHIID; it reads MRILYNICPY…GGPPRVRITG (66 aa). The VHIID signature appears at 309–313; it reads IHIID. Residues 359-391 are leucine repeat II (LRII); it reads IVGKMLKSMSEEFKIPLEFTPLSVYATQVTKEM. Positions 400–494 are PFYRE; that stretch reads LSVNFTLQLH…QHCLAKDIVN (95 aa). The interval 497–571 is SAW; it reads ACEGKDRVER…RKLISASAWH (75 aa).

It belongs to the GRAS family.

Its subcellular location is the nucleus. Its function is as follows. May play a regulatory role in the early step of oligosaccharide elicitor response, downstream of the membrane-associated high-affinity chitin-binding protein. This Oryza sativa subsp. japonica (Rice) protein is Chitin-inducible gibberellin-responsive protein 1 (CIGR1).